A 1014-amino-acid polypeptide reads, in one-letter code: Klotho (1014 aa).

Residues 1–34 (MPARAPPRRLPRLLLLRLLSLHLLLLTLRARCLS) form the signal peptide. Topologically, residues 35-983 (AEPGQGAQTW…GCGFFQTRKS (949 aa)) are extracellular. Glycosyl hydrolase-1 stretches follow at residues 59–508 (LHDT…NNGF) and 517–955 (LEGT…NNGF). N-linked (GlcNAc...) asparagine glycosylation is found at Asn161, Asn285, Asn346, Asn609, Asn614, and Asn696. Residues 984–1004 (LLAFISFLVFAFVTSLALIYY) traverse the membrane as a helical segment. Topologically, residues 1005 to 1014 (YSKKGRRRYK) are cytoplasmic.

This sequence belongs to the glycosyl hydrolase 1 family. Klotho subfamily. Homodimer. Interacts with FGF23 and FGFR1. N-glycosylated. As to expression, present in cortical renal tubules and the parathyroid (at protein level). Strongly expressed in kidney. Expressed at low levels in brain, lung, intestine and ovaries.

It localises to the cell membrane. It is found in the apical cell membrane. The protein resides in the secreted. It catalyses the reaction a beta-D-glucuronoside + H2O = D-glucuronate + an alcohol. In terms of biological role, may have weak glycosidase activity towards glucuronylated steroids. However, it lacks essential active site Glu residues at positions 241 and 874, suggesting it may be inactive as a glycosidase in vivo. May be involved in the regulation of calcium and phosphorus homeostasis by inhibiting the synthesis of active vitamin D. Essential factor for the specific interaction between FGF23 and FGFR1. Functionally, the Klotho peptide generated by cleavage of the membrane-bound isoform may be an anti-aging circulating hormone which would extend life span by inhibiting insulin/IGF1 signaling. The chain is Klotho (Kl) from Rattus norvegicus (Rat).